A 375-amino-acid polypeptide reads, in one-letter code: Alcohol dehydrogenase 1A (375 aa).

Gly-1 bears the N-acetylglycine mark. Cys-46, His-67, Cys-97, Cys-100, Cys-103, Cys-111, and Cys-174 together coordinate Zn(2+). NAD(+) contacts are provided by residues 199 to 204 (GLGGVG), Asp-223, Lys-228, 293 to 295 (VGL), and Arg-370.

The protein belongs to the zinc-containing alcohol dehydrogenase family. Class-I subfamily. Multimeric (with different ratios of monomers). It depends on Zn(2+) as a cofactor.

Its subcellular location is the cytoplasm. It carries out the reaction a primary alcohol + NAD(+) = an aldehyde + NADH + H(+). The catalysed reaction is a secondary alcohol + NAD(+) = a ketone + NADH + H(+). In Saara hardwickii (Indian spiny-tailed lizard), this protein is Alcohol dehydrogenase 1A.